We begin with the raw amino-acid sequence, 312 residues long: UDP-N-acetylenolpyruvoylglucosamine reductase (312 aa).

The region spanning 37 to 205 is the FAD-binding PCMH-type domain; that stretch reads VGGPADALVV…VCAEFALCPG (169 aa). R185 is a catalytic residue. The Proton donor role is filled by S234. E304 is an active-site residue.

The protein belongs to the MurB family. It depends on FAD as a cofactor.

The protein localises to the cytoplasm. The catalysed reaction is UDP-N-acetyl-alpha-D-muramate + NADP(+) = UDP-N-acetyl-3-O-(1-carboxyvinyl)-alpha-D-glucosamine + NADPH + H(+). It participates in cell wall biogenesis; peptidoglycan biosynthesis. Cell wall formation. In Syntrophus aciditrophicus (strain SB), this protein is UDP-N-acetylenolpyruvoylglucosamine reductase.